A 252-amino-acid chain; its full sequence is 5-oxoprolinase subunit A (252 aa).

Belongs to the LamB/PxpA family. Forms a complex composed of PxpA, PxpB and PxpC.

The enzyme catalyses 5-oxo-L-proline + ATP + 2 H2O = L-glutamate + ADP + phosphate + H(+). Catalyzes the cleavage of 5-oxoproline to form L-glutamate coupled to the hydrolysis of ATP to ADP and inorganic phosphate. This chain is 5-oxoprolinase subunit A, found in Bacillus cytotoxicus (strain DSM 22905 / CIP 110041 / 391-98 / NVH 391-98).